Consider the following 74-residue polypeptide: UPF0346 protein RBAM_019500 (74 aa).

It belongs to the UPF0346 family.

The polypeptide is UPF0346 protein RBAM_019500 (Bacillus velezensis (strain DSM 23117 / BGSC 10A6 / LMG 26770 / FZB42) (Bacillus amyloliquefaciens subsp. plantarum)).